The sequence spans 252 residues: Trans-aconitate 2-methyltransferase (252 aa).

This sequence belongs to the methyltransferase superfamily. Tam family.

The protein resides in the cytoplasm. The enzyme catalyses trans-aconitate + S-adenosyl-L-methionine = (E)-3-(methoxycarbonyl)pent-2-enedioate + S-adenosyl-L-homocysteine. Catalyzes the S-adenosylmethionine monomethyl esterification of trans-aconitate. This Shigella flexneri protein is Trans-aconitate 2-methyltransferase.